Reading from the N-terminus, the 418-residue chain is Serine hydroxymethyltransferase (418 aa).

Residues Leu120 and Gly124–Leu126 contribute to the (6S)-5,6,7,8-tetrahydrofolate site. The residue at position 229 (Lys229) is an N6-(pyridoxal phosphate)lysine. Position 353-355 (Ser353–Phe355) interacts with (6S)-5,6,7,8-tetrahydrofolate.

The protein belongs to the SHMT family. As to quaternary structure, homodimer. The cofactor is pyridoxal 5'-phosphate.

The protein resides in the cytoplasm. The enzyme catalyses (6R)-5,10-methylene-5,6,7,8-tetrahydrofolate + glycine + H2O = (6S)-5,6,7,8-tetrahydrofolate + L-serine. The protein operates within one-carbon metabolism; tetrahydrofolate interconversion. Its pathway is amino-acid biosynthesis; glycine biosynthesis; glycine from L-serine: step 1/1. Catalyzes the reversible interconversion of serine and glycine with tetrahydrofolate (THF) serving as the one-carbon carrier. This reaction serves as the major source of one-carbon groups required for the biosynthesis of purines, thymidylate, methionine, and other important biomolecules. Also exhibits THF-independent aldolase activity toward beta-hydroxyamino acids, producing glycine and aldehydes, via a retro-aldol mechanism. This is Serine hydroxymethyltransferase from Psychrobacter arcticus (strain DSM 17307 / VKM B-2377 / 273-4).